A 581-amino-acid chain; its full sequence is MITRLSHLFLRTLRDDPADAEVPSHKLLVRAGYVRRIAPGVYSWLPLGLRVLREVERVVREEMNGIGAQEISLPALLPREPYEASNRWTEYGEGLFRLKDRKGGDYLLGPTHEELFALTVKGEYNSYKDFPVTLYQVQTKYRDEERPRAGILRGREFVMKDSYSFDLTDEGLTESYRAHRDAYERIFARLGVKYVIVSATSGAMGGSASEEFLAESEIGEDTYVRCLESGYAANVEAVKTLAPEPIPFDGLPAAKVYDTPDTPTIATLVAWANEADLGRTVTAADTLKNLLVKVRQPGGKWELLAIGVPGDREVDDKRLGASLEPAEFELLTEADFEANPFLVKGYVGPKALQANGVRYLVDPRIVDGTSWITGADEKGRHVVGLVAGRDFVPDGTIEAAEVRGGDPSPDGAGELVAARGIEIGHVFQLGRKYTDVFSVDVLGENGKPVRPTMGSYGVGVSRLVAVIAEQHHDDKGLRWPAEVSPADVHVVIANKDDTAREGAEGLAADLDKAGLEVILDDRKASPGVKFKDSELLGVPLVVVVGRGWGEGKVEVRDRFTGESREVAAESALSEIVKTVRG.

Belongs to the class-II aminoacyl-tRNA synthetase family. ProS type 1 subfamily. In terms of assembly, homodimer.

The protein localises to the cytoplasm. It catalyses the reaction tRNA(Pro) + L-proline + ATP = L-prolyl-tRNA(Pro) + AMP + diphosphate. In terms of biological role, catalyzes the attachment of proline to tRNA(Pro) in a two-step reaction: proline is first activated by ATP to form Pro-AMP and then transferred to the acceptor end of tRNA(Pro). As ProRS can inadvertently accommodate and process non-cognate amino acids such as alanine and cysteine, to avoid such errors it has two additional distinct editing activities against alanine. One activity is designated as 'pretransfer' editing and involves the tRNA(Pro)-independent hydrolysis of activated Ala-AMP. The other activity is designated 'posttransfer' editing and involves deacylation of mischarged Ala-tRNA(Pro). The misacylated Cys-tRNA(Pro) is not edited by ProRS. The sequence is that of Proline--tRNA ligase from Rhodococcus opacus (strain B4).